The chain runs to 868 residues: Leucine--tRNA ligase (868 aa).

A 'HIGH' region motif is present at residues 42 to 52 (PYPSGKLHMGH). The 'KMSKS' region signature appears at 627-631 (KMSKS). Lysine 630 lines the ATP pocket.

The protein belongs to the class-I aminoacyl-tRNA synthetase family.

The protein resides in the cytoplasm. It catalyses the reaction tRNA(Leu) + L-leucine + ATP = L-leucyl-tRNA(Leu) + AMP + diphosphate. This Pseudomonas savastanoi pv. phaseolicola (strain 1448A / Race 6) (Pseudomonas syringae pv. phaseolicola (strain 1448A / Race 6)) protein is Leucine--tRNA ligase.